The sequence spans 407 residues: RNA-binding motif, single-stranded-interacting protein 2 (407 aa).

An N-acetylmethionine modification is found at Met1. Residues 29–54 (QQMAPPSPSNSTPNSSSGSNGNDQLS) are disordered. Residues 37–50 (SNSTPNSSSGSNGN) are compositionally biased toward low complexity. 2 RRM domains span residues 56 to 129 (TNLY…MAKQ) and 135 to 220 (TNLY…FADG). Residue Ser106 is modified to Phosphoserine. Position 269 is a phosphothreonine (Thr269). Phosphoserine occurs at positions 280 and 285.

It localises to the nucleus. This Homo sapiens (Human) protein is RNA-binding motif, single-stranded-interacting protein 2 (RBMS2).